The primary structure comprises 339 residues: Leucine-rich repeat-containing protein 59 (339 aa).

Residues 1 to 282 are Cytoplasmic-facing; the sequence is MARGGGKSGS…KHSWSRSVLR (282 aa). LRR repeat units lie at residues 10–31, 40–61, 63–84, and 86–107; these read SLKDKLDGNELDLSLCGLSEVP, KATVLDLSCNSLVSLPSDFCSL, HLVKLDLSKNRLQQLPVDFGRL, and SLQHLDLLNNRLVTLPVSFAQL. A coiled-coil region spans residues 181 to 254; the sequence is MKVIQSEQDR…EMEKKTKKET (74 aa). The disordered stretch occupies residues 186 to 275; sequence SEQDRERQRK…PPQPARHKHS (90 aa). Over residues 187-256 the composition is skewed to basic and acidic residues; that stretch reads EQDRERQRKL…EKKTKKETVQ (70 aa). The chain crosses the membrane as a helical span at residues 283-300; it reads ALLLVLLCILCTLAVCKL. Residues 301–339 are Lumenal-facing; the sequence is TELQHQPLCVSVNTLYEDVVAAVQNHKTLQNMLQQNSQQ.

In terms of assembly, interacts with SGO1.

The protein localises to the microsome membrane. It localises to the endoplasmic reticulum membrane. The protein resides in the nucleus envelope. In terms of biological role, required for nuclear import of FGF1. This is Leucine-rich repeat-containing protein 59 (LRRC59) from Gallus gallus (Chicken).